The sequence spans 335 residues: Nucleoid-associated protein KPN78578_25800 (335 aa).

Belongs to the YejK family.

The protein resides in the cytoplasm. It localises to the nucleoid. In Klebsiella pneumoniae subsp. pneumoniae (strain ATCC 700721 / MGH 78578), this protein is Nucleoid-associated protein KPN78578_25800.